A 446-amino-acid chain; its full sequence is N-succinylarginine dihydrolase (446 aa).

Substrate-binding positions include 19 to 28, asparagine 110, and 137 to 138; these read AGLSFGNVAS and HR. Glutamate 174 is an active-site residue. Arginine 213 provides a ligand contact to substrate. Residue histidine 249 is part of the active site. Aspartate 251 and asparagine 364 together coordinate substrate. Cysteine 370 acts as the Nucleophile in catalysis.

It belongs to the succinylarginine dihydrolase family. As to quaternary structure, homodimer.

It carries out the reaction N(2)-succinyl-L-arginine + 2 H2O + 2 H(+) = N(2)-succinyl-L-ornithine + 2 NH4(+) + CO2. The protein operates within amino-acid degradation; L-arginine degradation via AST pathway; L-glutamate and succinate from L-arginine: step 2/5. Functionally, catalyzes the hydrolysis of N(2)-succinylarginine into N(2)-succinylornithine, ammonia and CO(2). This Burkholderia orbicola (strain MC0-3) protein is N-succinylarginine dihydrolase.